The primary structure comprises 89 residues: HssA/B-like protein 15 (89 aa).

The protein belongs to the hssA/B family.

This is HssA/B-like protein 15 (hssl15) from Dictyostelium discoideum (Social amoeba).